The following is a 416-amino-acid chain: Enterobactin exporter EntS (416 aa).

At 1-21 (MNKQSWLLNLSLLKTHPAFRA) the chain is on the cytoplasmic side. Residues 22–42 (VFLARFISIVSLGLLGVAVPV) traverse the membrane as a helical segment. The Periplasmic segment spans residues 43–55 (QIQMMTHSTWQVG). A helical membrane pass occupies residues 56–76 (LSVTLTGGAMFVGLMVGGVLA). The Cytoplasmic segment spans residues 77–83 (DRYERKK). A helical transmembrane segment spans residues 84–104 (VILLARGTCGIGFIGLCLNAL). Residues 105 to 109 (LPEPS) lie on the Periplasmic side of the membrane. A helical transmembrane segment spans residues 110–130 (LLAIYLLGLWDGFFASLGVTA). Over 131–156 (LLAATPALVGRENLMQAGAITMLTVR) the chain is Cytoplasmic. The helical transmembrane segment at 157 to 177 (LGSVISPMIGGLLLATGGVAW) threads the bilayer. Residue Asn-178 is a topological domain, periplasmic. Residues 179 to 199 (YGLAAAGTFITLLPLLSLPAL) form a helical membrane-spanning segment. Topologically, residues 200–218 (PPPPQPREHPLKSLLAGFR) are cytoplasmic. Residues 219-239 (FLLASPLVGGIALLGGLLTMA) traverse the membrane as a helical segment. Over 240–256 (SAVRVLYPALADNWQMS) the chain is Periplasmic. Residues 257-277 (AAQIGFLYAAIPLGAAIGALT) traverse the membrane as a helical segment. At 278-287 (SGKLAHSVRP) the chain is on the cytoplasmic side. A helical transmembrane segment spans residues 288 to 307 (GLLMLLSTLGAFLAISLFGL). Residues 308–313 (MPMWIL) are Periplasmic-facing. Residues 314–336 (GVVCLALFGWLSAVSSLLQYTML) traverse the membrane as a helical segment. Residues 337–356 (QTQTPEAMLGRINGLWTAQN) lie on the Cytoplasmic side of the membrane. Residues 357-377 (VTGDAIGAALLGGLGAMMTPV) form a helical membrane-spanning segment. A topological domain (periplasmic) is located at residue Ala-378. Residues 379–399 (SASASGFGLLIIGVLLLLVLV) form a helical membrane-spanning segment. Topologically, residues 400–416 (ELRRFRQTPPQVTASDS) are cytoplasmic.

Belongs to the major facilitator superfamily. EntS (TC 2.A.1.38) family.

The protein localises to the cell inner membrane. Its function is as follows. Component of an export pathway for enterobactin. This is Enterobactin exporter EntS from Escherichia coli O45:K1 (strain S88 / ExPEC).